The chain runs to 139 residues: Aspartate 1-decarboxylase (139 aa).

The active-site Schiff-base intermediate with substrate; via pyruvic acid is S25. The residue at position 25 (S25) is a Pyruvic acid (Ser). T57 lines the substrate pocket. Residue Y58 is the Proton donor of the active site. 73–75 lines the substrate pocket; sequence GAA.

The protein belongs to the PanD family. In terms of assembly, heterooctamer of four alpha and four beta subunits. The cofactor is pyruvate. Is synthesized initially as an inactive proenzyme, which is activated by self-cleavage at a specific serine bond to produce a beta-subunit with a hydroxyl group at its C-terminus and an alpha-subunit with a pyruvoyl group at its N-terminus.

It localises to the cytoplasm. The catalysed reaction is L-aspartate + H(+) = beta-alanine + CO2. The protein operates within cofactor biosynthesis; (R)-pantothenate biosynthesis; beta-alanine from L-aspartate: step 1/1. In terms of biological role, catalyzes the pyruvoyl-dependent decarboxylation of aspartate to produce beta-alanine. The chain is Aspartate 1-decarboxylase from Mycobacterium bovis (strain BCG / Tokyo 172 / ATCC 35737 / TMC 1019).